The chain runs to 321 residues: Protease HtpX homolog (321 aa).

2 helical membrane passes run 6–26 (TAML…LIGG) and 28–48 (GGMM…YWNS). Residue His-130 participates in Zn(2+) binding. Glu-131 is an active-site residue. His-134 contacts Zn(2+). A run of 2 helical transmembrane segments spans residues 145–165 (ITAT…FFGG) and 173–193 (PLGF…AMLV). Glu-202 is a Zn(2+) binding site. A disordered region spans residues 281–321 (EFSPRASTPPPSGDRPVRKSGSVPTTGWRRGNENERKGPWS). Basic and acidic residues predominate over residues 310–321 (RGNENERKGPWS).

This sequence belongs to the peptidase M48B family. Requires Zn(2+) as cofactor.

The protein localises to the cell inner membrane. This is Protease HtpX homolog from Agrobacterium fabrum (strain C58 / ATCC 33970) (Agrobacterium tumefaciens (strain C58)).